A 488-amino-acid chain; its full sequence is ATP synthase subunit beta (488 aa).

ATP is bound at residue 164–171; that stretch reads GGAGMGKT.

The protein belongs to the ATPase alpha/beta chains family. In terms of assembly, F-type ATPases have 2 components, CF(1) - the catalytic core - and CF(0) - the membrane proton channel. CF(1) has five subunits: alpha(3), beta(3), gamma(1), delta(1), epsilon(1). CF(0) has four main subunits: a(1), b(1), b'(1) and c(9-12).

The protein localises to the cellular thylakoid membrane. The enzyme catalyses ATP + H2O + 4 H(+)(in) = ADP + phosphate + 5 H(+)(out). In terms of biological role, produces ATP from ADP in the presence of a proton gradient across the membrane. The catalytic sites are hosted primarily by the beta subunits. The protein is ATP synthase subunit beta of Synechococcus sp. (strain RCC307).